Here is a 156-residue protein sequence, read N- to C-terminus: Myosin regulatory light chain B, smooth adductor muscle (156 aa).

The residue at position 1 (alanine 1) is a Blocked amino end (Ala). EF-hand domains lie at 15–50 (KQIQ…LGRT) and 84–119 (DTEE…MGDN). Positions 28, 30, 32, and 39 each coordinate Ca(2+).

Functionally, in molluscan muscle, calcium regulation is associated with myosin rather than with actin. Muscle myosin contains two types of light chains: the catalytic light chain, essential for ATPase activity, and the regulatory light chain, a calcium-binding protein responsible for Ca(2+) dependent binding and Ca(2+) dependent Mg-ATPase activity. The chain is Myosin regulatory light chain B, smooth adductor muscle from Mizuhopecten yessoensis (Japanese scallop).